Reading from the N-terminus, the 101-residue chain is uncharacterized protein (101 aa).

2 helical membrane passes run L35–I55 and F66–F86.

It localises to the membrane. This is an uncharacterized protein from Saccharomyces cerevisiae (strain ATCC 204508 / S288c) (Baker's yeast).